A 249-amino-acid polypeptide reads, in one-letter code: MENILLGIVQGLTEFLPVSSSGHLAIFTAIFNKTPDVGYFAFLHLATFLAVVIFVKKEIFEIINGVFKKDEKYITLSLKLFVSMIPAAIVGIFFEDFIKSIFSETFFIGVFLAITGVFMLLSDKMDKNLKTITKIPYLDAFIIGIFQAFSVLPGISRSGSTLFAALLLGVKKEDAVKYSFLMSLPVIFGAGVLEMQKTVITKEYVYGFIVAFLTGILGLHLLKKMVIAGKLKFFGYYCFLASLFVIFYI.

The next 8 helical transmembrane spans lie at 11 to 31 (GLTE…TAIF), 35 to 55 (PDVG…VIFV), 74 to 94 (ITLS…GIFF), 101 to 121 (IFSE…FMLL), 135 to 155 (IPYL…LPGI), 175 to 195 (AVKY…VLEM), 208 to 228 (FIVA…MVIA), and 229 to 249 (GKLK…IFYI).

It belongs to the UppP family.

The protein resides in the cell membrane. It catalyses the reaction di-trans,octa-cis-undecaprenyl diphosphate + H2O = di-trans,octa-cis-undecaprenyl phosphate + phosphate + H(+). Catalyzes the dephosphorylation of undecaprenyl diphosphate (UPP). In Methanococcus vannielii (strain ATCC 35089 / DSM 1224 / JCM 13029 / OCM 148 / SB), this protein is Undecaprenyl-diphosphatase.